We begin with the raw amino-acid sequence, 651 residues long: Mediator of RNA polymerase II transcription subunit 17 (651 aa).

A disordered region spans residues 51 to 83; the sequence is QGSGSEEEEAAGTEGDAQEWPGAGSSADQDDEE.

This sequence belongs to the Mediator complex subunit 17 family. As to quaternary structure, interacts with GATA1 and PPARG. Component of the Mediator complex, which is composed of MED1, MED4, MED6, MED7, MED8, MED9, MED10, MED11, MED12, MED13, MED13L, MED14, MED15, MED16, MED17, MED18, MED19, MED20, MED21, MED22, MED23, MED24, MED25, MED26, MED27, MED29, MED30, MED31, CCNC, CDK8 and CDC2L6/CDK11. The MED12, MED13, CCNC and CDK8 subunits form a distinct module termed the CDK8 module. Mediator containing the CDK8 module is less active than Mediator lacking this module in supporting transcriptional activation. Individual preparations of the Mediator complex lacking one or more distinct subunits have been variously termed ARC, CRSP, DRIP, PC2, SMCC and TRAP. Interacts with STAT2. In terms of tissue distribution, ubiquitous.

The protein localises to the nucleus. In terms of biological role, component of the Mediator complex, a coactivator involved in the regulated transcription of nearly all RNA polymerase II-dependent genes. Mediator functions as a bridge to convey information from gene-specific regulatory proteins to the basal RNA polymerase II transcription machinery. Mediator is recruited to promoters by direct interactions with regulatory proteins and serves as a scaffold for the assembly of a functional preinitiation complex with RNA polymerase II and the general transcription factors. In Homo sapiens (Human), this protein is Mediator of RNA polymerase II transcription subunit 17 (MED17).